The primary structure comprises 327 residues: Microtubule-associated protein RP/EB family member 2 (327 aa).

The segment at 1-21 (MPGPTQTLSPNGENNNDIIQD) is disordered. An N-acetylalanine modification is found at proline 2. Serine 9 bears the Phosphoserine mark. A Calponin-homology (CH) domain is found at 57–159 (TMSRHDIIAW…FIQWFKKFYD (103 aa)). The residue at position 167 (tyrosine 167) is a Phosphotyrosine. Disordered regions lie at residues 171–240 (EARQ…DKDL) and 299–327 (ASEEHEGHTEEPEAEEQAHEQQPPQQEEY). Residues 187–327 (QIFNLPKKSH…EQQPPQQEEY (141 aa)) are DCTN1-binding. A compositionally biased stretch (low complexity) spans 200-234 (SPTAGAAKSSPAAKPGSTPSRPSSAKRASSSGSAS). A phosphoserine mark is found at serine 219 and serine 236. One can recognise an EB1 C-terminal domain in the interval 236 to 306 (SDKDLETQVI…LYASEEHEGH (71 aa)). The tract at residues 259 to 302 (EGVEKERDFYFGKLREIELLCQEHGQENDDLVQRLMDILYASEE) is APC-binding. Residues 300–317 (SEEHEGHTEEPEAEEQAH) show a composition bias toward basic and acidic residues. The segment covering 318–327 (EQQPPQQEEY) has biased composition (low complexity).

This sequence belongs to the MAPRE family. In terms of assembly, interacts with DCTN1. Interacts with APC (via C-terminal). Interacts with monomeric and polymerized tubulin. Interacts with SLAIN1. Interacts (via the N-terminal region) with BAG1. Interacts with ASB14. Interacts with HAX1; this interaction is essential for epidermal cell migration. Post-translationally, phosphorylated at Ser-236 by CK2 leading to enhanced cell adhesion. Phosphorylated by CDK1 and AURKB during mitosis reduces the binding affinity of MAPRE2 for microtubules. Ubiquitinated in an ASB14-dependent manner; leading to proteasomal degradation. Expressed in different tumor cell lines. Up-regulated in activated B- and T-lymphocytes.

It is found in the cytoplasm. It localises to the cytoskeleton. Its function is as follows. Adapter protein that is involved in microtubule polymerization, and spindle function by stabilizing microtubules and anchoring them at centrosomes. Therefore, ensures mitotic progression and genome stability. Acts as a central regulator of microtubule reorganization in apico-basal epithelial differentiation. Plays a role during oocyte meiosis by regulating microtubule dynamics. Participates in neurite growth by interacting with plexin B3/PLXNB3 and microtubule reorganization during apico-basal epithelial differentiation. Also plays an essential role for cell migration and focal adhesion dynamics. Mechanistically, recruits HAX1 to microtubules in order to regulate focal adhesion dynamics. The chain is Microtubule-associated protein RP/EB family member 2 (MAPRE2) from Homo sapiens (Human).